The sequence spans 557 residues: Dihydroxy-acid dehydratase (557 aa).

Cysteine 50 lines the [2Fe-2S] cluster pocket. Aspartate 82 serves as a coordination point for Mg(2+). Cysteine 123 contributes to the [2Fe-2S] cluster binding site. Residues aspartate 124 and lysine 125 each coordinate Mg(2+). Residue lysine 125 is modified to N6-carboxylysine. Cysteine 195 is a binding site for [2Fe-2S] cluster. Glutamate 447 is a binding site for Mg(2+). Serine 473 functions as the Proton acceptor in the catalytic mechanism.

Belongs to the IlvD/Edd family. Homodimer. It depends on [2Fe-2S] cluster as a cofactor. The cofactor is Mg(2+).

It carries out the reaction (2R)-2,3-dihydroxy-3-methylbutanoate = 3-methyl-2-oxobutanoate + H2O. The enzyme catalyses (2R,3R)-2,3-dihydroxy-3-methylpentanoate = (S)-3-methyl-2-oxopentanoate + H2O. The protein operates within amino-acid biosynthesis; L-isoleucine biosynthesis; L-isoleucine from 2-oxobutanoate: step 3/4. It functions in the pathway amino-acid biosynthesis; L-valine biosynthesis; L-valine from pyruvate: step 3/4. Functions in the biosynthesis of branched-chain amino acids. Catalyzes the dehydration of (2R,3R)-2,3-dihydroxy-3-methylpentanoate (2,3-dihydroxy-3-methylvalerate) into 2-oxo-3-methylpentanoate (2-oxo-3-methylvalerate) and of (2R)-2,3-dihydroxy-3-methylbutanoate (2,3-dihydroxyisovalerate) into 2-oxo-3-methylbutanoate (2-oxoisovalerate), the penultimate precursor to L-isoleucine and L-valine, respectively. In Metallosphaera sedula (strain ATCC 51363 / DSM 5348 / JCM 9185 / NBRC 15509 / TH2), this protein is Dihydroxy-acid dehydratase.